The sequence spans 192 residues: Ion-translocating oxidoreductase complex subunit B (192 aa).

The interval 1-26 (MNTIWIAVGALTLLGLVFGAILGYAS) is hydrophobic. The 60-residue stretch at 32 to 91 (EDDPVVEKIDAILPQSQCGQCGYPGCRPYAEAVGLQGEKINRCAPGGEAVMLKMAELLNV) folds into the 4Fe-4S domain. The [4Fe-4S] cluster site is built by C49, C52, C57, C74, C117, C120, C123, C127, C147, C150, C153, and C157. 2 4Fe-4S ferredoxin-type domains span residues 108–137 (MLAV…GATR) and 138–167 (AMHT…LRPV).

This sequence belongs to the 4Fe4S bacterial-type ferredoxin family. RnfB subfamily. As to quaternary structure, the complex is composed of six subunits: RsxA, RsxB, RsxC, RsxD, RsxE and RsxG. It depends on [4Fe-4S] cluster as a cofactor.

It is found in the cell inner membrane. Its function is as follows. Part of a membrane-bound complex that couples electron transfer with translocation of ions across the membrane. Required to maintain the reduced state of SoxR. This is Ion-translocating oxidoreductase complex subunit B from Salmonella agona (strain SL483).